A 186-amino-acid polypeptide reads, in one-letter code: Ribosome-recycling factor (186 aa).

It belongs to the RRF family.

It is found in the cytoplasm. Responsible for the release of ribosomes from messenger RNA at the termination of protein biosynthesis. May increase the efficiency of translation by recycling ribosomes from one round of translation to another. The protein is Ribosome-recycling factor of Rubrobacter xylanophilus (strain DSM 9941 / JCM 11954 / NBRC 16129 / PRD-1).